Reading from the N-terminus, the 843-residue chain is Vacuolar membrane protease (843 aa).

Topologically, residues 1-16 (MTNSRRHIFERICAKA) are cytoplasmic. Residues 17-37 (FQSSLTCSIFGFTVLLILYLL) traverse the membrane as a helical segment. Over 38–347 (DWKRIAQVPG…LAFGKYWQLN (310 aa)) the chain is Vacuolar. Asparagine 96, asparagine 109, and asparagine 117 each carry an N-linked (GlcNAc...) asparagine glycan. Histidine 147 and aspartate 159 together coordinate Zn(2+). Glutamate 191 serves as the catalytic Proton acceptor. Glutamate 192 provides a ligand contact to Zn(2+). Asparagine 209 is a glycosylation site (N-linked (GlcNAc...) asparagine). Residue glutamate 217 participates in Zn(2+) binding. Asparagine 275 carries an N-linked (GlcNAc...) asparagine glycan. Histidine 292 lines the Zn(2+) pocket. Asparagine 322 carries N-linked (GlcNAc...) asparagine glycosylation. A helical transmembrane segment spans residues 348-368 (LPIYQVLNIIFAVICPIVLLL). Over 369 to 386 (TLIRFPSLYEQLKKPRYT) the chain is Cytoplasmic. The chain crosses the membrane as a helical span at residues 387–407 (VCFVVSCIFVSIFDTLTVLLL). The Vacuolar segment spans residues 408–417 (TWINPYVINS). The helical transmembrane segment at 418 to 438 (HTGLILALFYLTNLIALAFSF) threads the bilayer. Over 439-456 (RAAATHSKLSSEDLSSIE) the chain is Cytoplasmic. The chain crosses the membrane as a helical span at residues 457-477 (IVFIWYAQILWYLVFIVSVIL). Residues 478–484 (SIYFQLG) lie on the Vacuolar side of the membrane. A helical transmembrane segment spans residues 485–505 (STYWVTLSYLCTFTCCIMTII). The Cytoplasmic segment spans residues 506-566 (RINYFVDNVV…NRAHVKLIDN (61 aa)). Residues 567–587 (IWTVIYFIFNVPFPVFLCYDI) form a helical membrane-spanning segment. Residues 588–608 (LVETILPAGSQTLTDSVFSSK) lie on the Vacuolar side of the membrane. The chain crosses the membrane as a helical span at residues 609-629 (LYKLVIFVVFLSLVNSGPFIF). Over 630–636 (RALSKKS) the chain is Cytoplasmic. A helical membrane pass occupies residues 637-657 (LAVLTMLWITLFVQALSVNPF). The Vacuolar segment spans residues 658 to 843 (TESAPLKLSF…LLKVKSSIVI (186 aa)). N-linked (GlcNAc...) asparagine glycans are attached at residues asparagine 677, asparagine 703, asparagine 707, asparagine 754, and asparagine 788.

It belongs to the peptidase M28 family. Zn(2+) serves as cofactor.

It is found in the membrane. The protein localises to the vacuole membrane. Its function is as follows. May be involved in vacuolar sorting and osmoregulation. The sequence is that of Vacuolar membrane protease from Schizosaccharomyces pombe (strain 972 / ATCC 24843) (Fission yeast).